A 134-amino-acid chain; its full sequence is Small ribosomal subunit protein uS8c (134 aa).

Belongs to the universal ribosomal protein uS8 family. In terms of assembly, part of the 30S ribosomal subunit.

The protein localises to the plastid. It localises to the chloroplast. Functionally, one of the primary rRNA binding proteins, it binds directly to 16S rRNA central domain where it helps coordinate assembly of the platform of the 30S subunit. This is Small ribosomal subunit protein uS8c (rps8) from Capsella bursa-pastoris (Shepherd's purse).